The following is a 477-amino-acid chain: Glycogen synthase (477 aa).

Residue Lys15 coordinates ADP-alpha-D-glucose.

This sequence belongs to the glycosyltransferase 1 family. Bacterial/plant glycogen synthase subfamily.

It carries out the reaction [(1-&gt;4)-alpha-D-glucosyl](n) + ADP-alpha-D-glucose = [(1-&gt;4)-alpha-D-glucosyl](n+1) + ADP + H(+). It participates in glycan biosynthesis; glycogen biosynthesis. Synthesizes alpha-1,4-glucan chains using ADP-glucose. This is Glycogen synthase from Salmonella arizonae (strain ATCC BAA-731 / CDC346-86 / RSK2980).